We begin with the raw amino-acid sequence, 892 residues long: MTQYTPMIQQYLKVKADYQDAFLFFRLGDFYEMFFEDAVKAAHELEITLTSRDGGSSERIPMCGVPYHAAKNYIEQLVEKGYKVAVCEQVEDPKTAKGVVRREVVQLITPGTMMEGRTIDEKENNFLAALTHFEDGSYALACNDLTTGQNTVTLLTGSVEDILLEVYATGSKEIVVDSSFSKDELNKLTETLKMTISYEDATAIPEGLEHLVKNVSQAKLIKAVGRLFNYVIRTQKRSLDHLQPVEIYYTNQFMKIDVHSKRNLELTETLRTKEKTGSLLWLLDKTKTAMGGRMLKQWMERPLIQKERIEERLEMVETFVNDYFLREDLKEKLKEVYDLERLAGKVAFGNVNARDLLQLRRSLLQVPAILEAISLLDNAYAARLIQGADPCESLTELLGRSIQENPPLSIKDGDIIKDGYNDKLDQYRYVSKNGKTWIAELEKRERDITGIKSLKIGYNRIFGYYIEVTKANLGALPEGRYERKQTLANAERFITDELKEKETLILEAEEKIVQLEYDLFTALREEVKVFIPKLQHLAKVISELDVLQSFATVSEEEQFVKPVLTTKREIFIKDGRHPVVEKVLNGKLYVPNDCIMPENMDVFLITGPNMSGKSTYMRQLALVTVMSQIGCFVPATEAVLPVFDQIFTRIGAADDLISGQSTFMVEMLEAKNAIANASERSLILFDEIGRGTSTYDGMALAQAIIEHIHDQIGAKTLFSTHYHELTVLEDSLDQLKNVHVSAIEENGKVVFLHKIQDGAADKSYGIHVAQLAELPDSLIARAKEVLAQLEGQEEIVIPKRVEVKAQEQEVIPEPIVVKEEPIEIEETKVDNEEESQLSFFGAEQSSKKQAKPALDAKETAVLTQIKKIDLLDMTPLEAMNELYRLQKKLKKG.

607 to 614 (GPNMSGKS) lines the ATP pocket.

The protein belongs to the DNA mismatch repair MutS family.

Its function is as follows. This protein is involved in the repair of mismatches in DNA. It is possible that it carries out the mismatch recognition step. This protein has a weak ATPase activity. This chain is DNA mismatch repair protein MutS, found in Bacillus cereus (strain AH820).